Reading from the N-terminus, the 365-residue chain is L-lactate oxidase (365 aa).

Residues 6-365 (RIPPGVWNAI…ITHDTLTPSC (360 aa)) enclose the FMN hydroxy acid dehydrogenase domain. Tyr-32 contacts pyruvate. FMN is bound by residues 85–87 (PVA), Ser-114, and Gln-135. Residue Tyr-137 participates in pyruvate binding. Thr-163, Lys-237, and Ser-259 together coordinate FMN. Positions 261 and 264 each coordinate pyruvate. His-261 (proton acceptor) is an active-site residue. Residues 292 to 296 (DGGVR) and Arg-316 each bind FMN.

Belongs to the FMN-dependent alpha-hydroxy acid dehydrogenase family. In terms of assembly, homotetramer. The cofactor is FMN.

It catalyses the reaction (S)-lactate + O2 = pyruvate + H2O2. It carries out the reaction glycolate + O2 = glyoxylate + H2O2. In terms of biological role, catalyzes the oxidation of (S)-lactate (L-lactate) to pyruvate, with a reduction of O2 to H2O2. To a lesser extent is also able to use glycolate as substrate. The polypeptide is L-lactate oxidase (Alicycliphilus denitrificans (strain DSM 14773 / CIP 107495 / K601)).